Consider the following 296-residue polypeptide: D-alanine--D-alanine ligase (296 aa).

The 191-residue stretch at 103–293 (KEILMHHRMP…FDSFVKRIIE (191 aa)) folds into the ATP-grasp domain. Position 129–180 (129–180 (ISFPAAVKPSSGGSSIATFKVKSIQELKHAYEEASKYGEVMIEQWVTGKEIT)) interacts with ATP. Residues Asp247, Glu260, and Asn262 each contribute to the Mg(2+) site.

This sequence belongs to the D-alanine--D-alanine ligase family. Mg(2+) is required as a cofactor. It depends on Mn(2+) as a cofactor.

The protein resides in the cytoplasm. The enzyme catalyses 2 D-alanine + ATP = D-alanyl-D-alanine + ADP + phosphate + H(+). It functions in the pathway cell wall biogenesis; peptidoglycan biosynthesis. Functionally, cell wall formation. The protein is D-alanine--D-alanine ligase of Francisella tularensis subsp. holarctica (strain LVS).